We begin with the raw amino-acid sequence, 1091 residues long: Protein JSN1 (1091 aa).

Disordered stretches follow at residues 31 to 51 (EYENNGESNSQLQQQPQKLGS) and 75 to 131 (HHSK…GSLT). Over residues 99 to 111 (TVASKTPRASPSR) the composition is skewed to polar residues. Ser129 bears the Phosphoserine mark. A Phosphothreonine modification is found at Thr131. Ser160 and Ser168 each carry phosphoserine. The region spanning 340-426 (NTISISNVFP…APSKISFAKI (87 aa)) is the RRM domain. Low complexity-rich tracts occupy residues 482 to 494 (QQSQQSQHQNHSS) and 507 to 520 (NNNNSMHGNNNNSA). Disordered stretches follow at residues 482–534 (QQSQ…PPPN) and 568–591 (HKGTSDTQNFGPLPEPLSGREFDP). The PUM-HD domain maps to 557-913 (QINSLIKKSL…RLLEEVGLAS (357 aa)). A compositionally biased stretch (polar residues) spans 568–577 (HKGTSDTQNF). Pumilio repeat units lie at residues 617–652 (AMLDELPELSSDYLGNTIVQKLFEHSSDIIKDIMLR), 653–689 (KTSKYLTSMGVHKNGTWACQKMITMAHTPRQIMQVTQ), 690–724 (GVKDYCTPLINDQFGNYVIQCVLKFGFPWNQFIFE), 725–760 (SIIANFWVIVQNRYGARAVRACLEAHDIVTPEQSIV), and 801–837 (RLTKRIVELCGHRLASLTILKVLNYRGDDNARKIILD). The tract at residues 911 to 981 (LASPSSTHNK…GSSASTLSPG (71 aa)) is disordered. Ser913 carries the phosphoserine modification. Low complexity-rich tracts occupy residues 915–935 (SSTHNKTKQQQQQHHNSSISH) and 951–979 (SVSSVKSGGSKHTTMNTTTTNGSSASTLS).

The polypeptide is Protein JSN1 (JSN1) (Saccharomyces cerevisiae (strain ATCC 204508 / S288c) (Baker's yeast)).